The following is a 911-amino-acid chain: MVSLLKKLIGSRNDRLLKEYRKQVAQINSLEPKISALSDEELSAKTQEFRDRHQQGTSLDDLLPEAFAVVREAGKRVFGMRHFDVQMLGGIALHNGKIAEMRTGEGKTLMATLPVYLNAIAGKGVHVVTVNDYLARRDAEWMGRLYRFLGMSTGVVVPQQPNDEKIAAYAADITYGTNNEFGFDYLRDNMEYRVEDRRQRRLFYAIVDEVDSILIDEARTPLIISGQAEDHTELYVRMNAVPPLLKRMASEPKPHEPEPEGDYWVDEKSQQVYMSEAGHESAEKILTRVGLLPEGESLYDPRHIALMHHMMVALRAHTLFFRDQQYVVQDDEVVIVDEFTGRLMVGRRWSDGLHQAVEAKEGVKIQHENQTLASITFQNYFRMYDKLSGMTGTADTEAYEFQEIYTLETVIIPTNKPMVRKDQNDQVFKTTQEKYQAILNDIRDCHERGQPVLVGTTSIENSELLAGLLRQAKLPHEVLNAKQHAREAEIVAEAGKPGHITIATNMAGRGTDIVLGGSVDKQVDLIHANEALSEAEKEARIETLRAEWKPLNERVKQAGGLRIIGTERHESRRIDNQLRGRAGRQGDPGSSRFYLSLEDPLMRIFAGDRVRAIMERLKLPEGEPIEAGMVTRSIETAQRKVEGRNFDIRKQLLEYDDVANDQRKVLYSQRNEVLEAASIGATVEGLRDAAVAEMFRGFIPEESVEEQWDVAGLEKALAGDWHIQLPLTDMLEQEPNLTDEELLERVVAAARQIYTAKVEQVGAESWAQFERSIMLQSIDTHWREHLSALDYLRQGIHLRGYAQKNPKQEYKREAFELFSGMLDRIRDDVVRVLMTVRVQSAEQVEQAEADAAQPHVQNVQYHHSDYDEALADDGQPQGAQPVRNVLPKVGRNEPCPCGSGKKYKHCHGQLA.

ATP is bound by residues Q86, 104–108 (GEGKT), and D512. Residues C895, C897, C906, and H907 each contribute to the Zn(2+) site.

This sequence belongs to the SecA family. As to quaternary structure, monomer and homodimer. Part of the essential Sec protein translocation apparatus which comprises SecA, SecYEG and auxiliary proteins SecDF-YajC and YidC. It depends on Zn(2+) as a cofactor.

The protein resides in the cell inner membrane. Its subcellular location is the cytoplasm. It carries out the reaction ATP + H2O + cellular proteinSide 1 = ADP + phosphate + cellular proteinSide 2.. In terms of biological role, part of the Sec protein translocase complex. Interacts with the SecYEG preprotein conducting channel. Has a central role in coupling the hydrolysis of ATP to the transfer of proteins into and across the cell membrane, serving both as a receptor for the preprotein-SecB complex and as an ATP-driven molecular motor driving the stepwise translocation of polypeptide chains across the membrane. This is Protein translocase subunit SecA from Bordetella bronchiseptica (strain ATCC BAA-588 / NCTC 13252 / RB50) (Alcaligenes bronchisepticus).